Here is a 227-residue protein sequence, read N- to C-terminus: MASSDVKLIGAWASPFVMRPRIALNLKSVPYEFLQETFGSKSELLLKSNPVHKKIPVLLHADKPVSESNIIVEYIDDTWSSSGPSILPSDPYDRAMARFWAAYIDEKWFVALRGFLKAGGEEEKKAVIAQLEEGNAFLEKAFIDCSKGKPFFNGDNIGYLDIALGCFLAWLRVTELAVSYKILDEAKTPSLSKWAENFCNDPAVKPVMPETAKLAEFAKKIFPKPQA.

Residues 4–83 enclose the GST N-terminal domain; the sequence is SDVKLIGAWA…YIDDTWSSSG (80 aa). Residues 14 to 15, 40 to 41, 54 to 55, and 67 to 68 contribute to the glutathione site; these read SP, SK, KI, and ES. The region spanning 90–222 is the GST C-terminal domain; sequence DPYDRAMARF…KLAEFAKKIF (133 aa).

It belongs to the GST superfamily. Tau family.

It is found in the cytoplasm. The protein resides in the cytosol. It catalyses the reaction RX + glutathione = an S-substituted glutathione + a halide anion + H(+). In terms of biological role, involved in light signaling, mainly phyA-mediated photomorphogenesis and in the integration of various phytohormone signals to modulate various aspects of plant development by affecting glutathione pools. In vitro, possesses glutathione S-transferase activity toward 1-chloro-2,4-dinitrobenzene (CDNB) and benzyl isothiocyanate (BITC). The polypeptide is Glutathione S-transferase U17 (GSTU17) (Arabidopsis thaliana (Mouse-ear cress)).